Here is a 336-residue protein sequence, read N- to C-terminus: Ribose-phosphate pyrophosphokinase (336 aa).

ATP-binding positions include 43–45 (DQE) and 102–103 (RQ). The Mg(2+) site is built by His136 and Asp178. Lys201 is a catalytic residue. Residues Arg203, Asp227, and 231–235 (DTAGT) contribute to the D-ribose 5-phosphate site.

It belongs to the ribose-phosphate pyrophosphokinase family. Class I subfamily. As to quaternary structure, homohexamer. Mg(2+) is required as a cofactor.

It is found in the cytoplasm. It catalyses the reaction D-ribose 5-phosphate + ATP = 5-phospho-alpha-D-ribose 1-diphosphate + AMP + H(+). It participates in metabolic intermediate biosynthesis; 5-phospho-alpha-D-ribose 1-diphosphate biosynthesis; 5-phospho-alpha-D-ribose 1-diphosphate from D-ribose 5-phosphate (route I): step 1/1. In terms of biological role, involved in the biosynthesis of the central metabolite phospho-alpha-D-ribosyl-1-pyrophosphate (PRPP) via the transfer of pyrophosphoryl group from ATP to 1-hydroxyl of ribose-5-phosphate (Rib-5-P). In Cereibacter sphaeroides (strain KD131 / KCTC 12085) (Rhodobacter sphaeroides), this protein is Ribose-phosphate pyrophosphokinase.